Reading from the N-terminus, the 603-residue chain is Cholinesterase (603 aa).

Residues 1–29 (MQTQHTKVTQTHFLLWILLLCMPFGKSHT) form the signal peptide. A glycan (N-linked (GlcNAc...) asparagine) is linked at Asn86. A disulfide bridge links Cys94 with Cys121. The N-linked (GlcNAc...) asparagine glycan is linked to Asn135. 145-146 (GG) is a binding site for substrate. Ser227 acts as the Acyl-ester intermediate in catalysis. Ser227 bears the Phosphoserine mark. An N-linked (GlcNAc...) asparagine glycan is attached at Asn270. Residues Cys281 and Cys292 are joined by a disulfide bond. Residue Glu354 is the Charge relay system of the active site. N-linked (GlcNAc...) asparagine glycosylation is present at Asn370. A disulfide bond links Cys429 and Cys548. Catalysis depends on His467, which acts as the Charge relay system. N-linked (GlcNAc...) asparagine glycosylation is found at Asn484, Asn510, and Asn515.

This sequence belongs to the type-B carboxylesterase/lipase family. In terms of assembly, homotetramer; disulfide-linked. Dimer of dimers. As to expression, present in most cells except erythrocytes.

It localises to the secreted. The enzyme catalyses an acylcholine + H2O = a carboxylate + choline + H(+). Esterase with broad substrate specificity. Contributes to the inactivation of the neurotransmitter acetylcholine. Can degrade neurotoxic organophosphate esters. This is Cholinesterase (Bche) from Mus musculus (Mouse).